The following is a 187-amino-acid chain: Holliday junction branch migration complex subunit RuvA (187 aa).

The domain I stretch occupies residues 1 to 64 (MIEYVRGIIE…EDGFQIFGFK (64 aa)). Residues 65–136 (TKEELDLFEK…ELKDKLPKEI (72 aa)) form a domain II region. Positions 136-139 (IVFE) are flexible linker. The tract at residues 140–187 (GDNNFSNEALEALLALGYTKSEAIYALADITCDSVEDAVKQALKKLMK) is domain III.

The protein belongs to the RuvA family. In terms of assembly, homotetramer. Forms an RuvA(8)-RuvB(12)-Holliday junction (HJ) complex. HJ DNA is sandwiched between 2 RuvA tetramers; dsDNA enters through RuvA and exits via RuvB. An RuvB hexamer assembles on each DNA strand where it exits the tetramer. Each RuvB hexamer is contacted by two RuvA subunits (via domain III) on 2 adjacent RuvB subunits; this complex drives branch migration. In the full resolvosome a probable DNA-RuvA(4)-RuvB(12)-RuvC(2) complex forms which resolves the HJ.

The protein resides in the cytoplasm. The RuvA-RuvB-RuvC complex processes Holliday junction (HJ) DNA during genetic recombination and DNA repair, while the RuvA-RuvB complex plays an important role in the rescue of blocked DNA replication forks via replication fork reversal (RFR). RuvA specifically binds to HJ cruciform DNA, conferring on it an open structure. The RuvB hexamer acts as an ATP-dependent pump, pulling dsDNA into and through the RuvAB complex. HJ branch migration allows RuvC to scan DNA until it finds its consensus sequence, where it cleaves and resolves the cruciform DNA. In Thermoanaerobacter pseudethanolicus (strain ATCC 33223 / 39E) (Clostridium thermohydrosulfuricum), this protein is Holliday junction branch migration complex subunit RuvA.